The sequence spans 537 residues: Efflux pump ustT (537 aa).

A compositionally biased stretch (basic and acidic residues) spans 1 to 25 (MAKEAQSLHELDNMKEKEVDQEKKA). Residues 1 to 50 (MAKEAQSLHELDNMKEKEVDQEKKAPTSVGDQEEHDDPKKQASHSQNVSE) form a disordered region. An N-linked (GlcNAc...) asparagine glycan is attached at N47. The next 8 membrane-spanning stretches (helical) occupy residues 71 to 91 (PLAM…VSLL), 104 to 124 (WVYM…AGAM), 137 to 157 (GIGL…NAPL), 162 to 182 (MFLG…PLIG), 193 to 213 (WCFI…FFFV), 236 to 256 (LGSA…QWAG), 266 to 286 (IILL…SQML), and 304 to 324 (FGSF…TYWI). N333 carries N-linked (GlcNAc...) asparagine glycosylation. Transmembrane regions (helical) follow at residues 339-359 (AGIR…MGGG), 363-383 (LIGY…VGAG), 397-417 (WIGY…QASL), and 430-450 (TAIS…VCIG). N-linked (GlcNAc...) asparagine glycosylation is present at N501. The helical transmembrane segment at 507 to 527 (TFYVALAAGITSMLSAFLVQW) threads the bilayer.

Belongs to the major facilitator superfamily. TCR/Tet family.

The protein resides in the cell membrane. Efflux pump; part of the gene cluster that mediates the biosynthesis of ustilaginoidins, dimeric gamma-naphthopyrones isolated from different fungal species. This chain is Efflux pump ustT, found in Ustilaginoidea virens (Rice false smut fungus).